The primary structure comprises 1138 residues: Trafficking protein particle complex subunit 9 (1138 aa).

S557 and S944 each carry phosphoserine.

It belongs to the NIBP family. In terms of assembly, component of the multisubunit TRAPP (transport protein particle) complex, which includes at least TRAPPC2, TRAPPC2L, TRAPPC3, TRAPPC3L, TRAPPC4, TRAPPC5, TRAPPC8, TRAPPC9, TRAPPC10, TRAPPC11 and TRAPPC12. Directly interacts with IKBKB and MAP3K14.

Its subcellular location is the golgi apparatus. It is found in the cis-Golgi network. The protein localises to the endoplasmic reticulum. The protein resides in the cytoplasm. Functionally, functions as an activator of NF-kappa-B through increased phosphorylation of the IKK complex. May function in neuronal cells differentiation. May play a role in vesicular transport from endoplasmic reticulum to Golgi. The polypeptide is Trafficking protein particle complex subunit 9 (TRAPPC9) (Bos taurus (Bovine)).